A 94-amino-acid chain; its full sequence is Co-chaperonin GroES (94 aa).

It belongs to the GroES chaperonin family. In terms of assembly, heptamer of 7 subunits arranged in a ring. Interacts with the chaperonin GroEL.

It localises to the cytoplasm. In terms of biological role, together with the chaperonin GroEL, plays an essential role in assisting protein folding. The GroEL-GroES system forms a nano-cage that allows encapsulation of the non-native substrate proteins and provides a physical environment optimized to promote and accelerate protein folding. GroES binds to the apical surface of the GroEL ring, thereby capping the opening of the GroEL channel. The chain is Co-chaperonin GroES from Bacillus mycoides (strain KBAB4) (Bacillus weihenstephanensis).